The sequence spans 145 residues: MMDSVQIRKYLPHRYPFLLIDRVVELVEGDYILAYKNITINEEVFQGHFPNYPVFPGVMLIEAMAQACGVLGFKTMDKTPDDGSIYLFAGIDNVRFKRQVIPGDRVFFNCKKISDKRGIWKFECVATVDDQLVTSATIMCADRSI.

Residue His48 is part of the active site.

It belongs to the thioester dehydratase family. FabZ subfamily.

The protein resides in the cytoplasm. It carries out the reaction a (3R)-hydroxyacyl-[ACP] = a (2E)-enoyl-[ACP] + H2O. In terms of biological role, involved in unsaturated fatty acids biosynthesis. Catalyzes the dehydration of short chain beta-hydroxyacyl-ACPs and long chain saturated and unsaturated beta-hydroxyacyl-ACPs. This chain is 3-hydroxyacyl-[acyl-carrier-protein] dehydratase FabZ, found in Saccharophagus degradans (strain 2-40 / ATCC 43961 / DSM 17024).